Consider the following 423-residue polypeptide: MAKLSPLTLIFIAACLSRILQLTILSGLSKALPLFDTSPSLLLSSPPPALRWDAIHFASVAYNGYEYEQQVAFQPGWLAVMRLAGEGVRFIRAASVVELKDVILGGTIVANVAFVAATLVLYKLTKHIFNPTFAFLTSLLYLLPPTATPSAPYTEPIYSLLTFSGIYLLSIKRQMVLAGLCFAGATTIRSTGIFNSITLMCFAVFGDAHIFDLDPKDYCKIRKKLKPFLSAILVVAPFFMFQHYTETVFCTRELKRASTARPWCSNSPPVSYGFVQKLYWNVGPFEYWTVSQLPNFALAMPILFFSLAGVVKFFSHLVSSSQVLNHGTEEIPPPPILFELYSVHVLTMALLLFTSHTQITLRVCLGDPVVWWNAVKLGFDNVQIGEAPTGQVKVNKFGRYWIGWTVVWGAVAAVLWAGHYPPA.

9 consecutive transmembrane segments (helical) span residues 7–27 (LTLI…ILSG), 102–122 (VILG…LVLY), 128–148 (IFNP…PTAT), 151–171 (APYT…LLSI), 191–211 (TGIF…AHIF), 228–248 (FLSA…TETV), 298–318 (LAMP…SHLV), 333–353 (PPPI…LLLF), and 400–420 (YWIG…AGHY).

Belongs to the PIGV family.

The protein localises to the endoplasmic reticulum membrane. It participates in glycolipid biosynthesis; glycosylphosphatidylinositol-anchor biosynthesis. In terms of biological role, mannosyltransferase involved in glycosylphosphatidylinositol-anchor biosynthesis. Transfers the second mannose to the glycosylphosphatidylinositol during GPI precursor assembly. This is GPI mannosyltransferase 2 (GPI18) from Cryptococcus neoformans var. neoformans serotype D (strain JEC21 / ATCC MYA-565) (Filobasidiella neoformans).